Consider the following 418-residue polypeptide: MSVYAGIFNTTLNPQELNMKSFAGTILRRVPNGSAPLLAMTSVVGSTTAKASTHGYFSKTMVFASAVVTAEAAADATVLTVENSDGLTKGMIFYNEATGENMRLELVNGLNLTVKRQTGRISAAIIAANTKLIVIGTAFEEGSQRPTARSIQPVYVPNFTQIFRNAWALTDTARASYAEAGYSNITESRRDCMDFHATEQETAIFFGQAFMGTYNGQPLHTTQGIVDAVRQYAPDNVNAMPNPTAVTYDDVVDATIDAFKWSVNVGDNTQRVMFCDTVGMRTMQDIGRFFGEVTVTQRETSYGMVFTEWKFFKGRLIIKEHPLFSAIGISPGFAVVVDVPAVKLAYMDGRNAKVENYGQGGGENKSGATDYSYGHGVDAQGGSLTSEWALELLNPQGCAVITGLQKAKERVYLTAPAP.

Multimerizes.

It is found in the virion. Its function is as follows. The most highly expressed virion protein; probably the major capsid protein. This is Major capsid protein from Pseudomonas phage PaMx41.